Here is a 114-residue protein sequence, read N- to C-terminus: Hydrogenase maturation factor HypA (114 aa).

Residue His2 coordinates Ni(2+). Residues Cys70, Cys73, Cys86, and Cys89 each coordinate Zn(2+).

It belongs to the HypA/HybF family.

Involved in the maturation of [NiFe] hydrogenases. Required for nickel insertion into the metal center of the hydrogenase. The polypeptide is Hydrogenase maturation factor HypA (Rippkaea orientalis (strain PCC 8801 / RF-1) (Cyanothece sp. (strain PCC 8801))).